The sequence spans 186 residues: Large ribosomal subunit protein uL5 (186 aa).

This sequence belongs to the universal ribosomal protein uL5 family. As to quaternary structure, part of the 50S ribosomal subunit; part of the 5S rRNA/L5/L18/L25 subcomplex. Contacts the 5S rRNA and the P site tRNA. Forms a bridge to the 30S subunit in the 70S ribosome.

In terms of biological role, this is one of the proteins that bind and probably mediate the attachment of the 5S RNA into the large ribosomal subunit, where it forms part of the central protuberance. In the 70S ribosome it contacts protein S13 of the 30S subunit (bridge B1b), connecting the 2 subunits; this bridge is implicated in subunit movement. Contacts the P site tRNA; the 5S rRNA and some of its associated proteins might help stabilize positioning of ribosome-bound tRNAs. The sequence is that of Large ribosomal subunit protein uL5 from Jannaschia sp. (strain CCS1).